A 320-amino-acid chain; its full sequence is Biotin synthase (320 aa).

Residues Gly43–Arg270 enclose the Radical SAM core domain. 3 residues coordinate [4Fe-4S] cluster: Cys58, Cys62, and Cys65. Residues Cys102, Cys133, Cys193, and Arg265 each contribute to the [2Fe-2S] cluster site.

Belongs to the radical SAM superfamily. Biotin synthase family. In terms of assembly, homodimer. The cofactor is [4Fe-4S] cluster. Requires [2Fe-2S] cluster as cofactor.

The catalysed reaction is (4R,5S)-dethiobiotin + (sulfur carrier)-SH + 2 reduced [2Fe-2S]-[ferredoxin] + 2 S-adenosyl-L-methionine = (sulfur carrier)-H + biotin + 2 5'-deoxyadenosine + 2 L-methionine + 2 oxidized [2Fe-2S]-[ferredoxin]. It participates in cofactor biosynthesis; biotin biosynthesis; biotin from 7,8-diaminononanoate: step 2/2. Catalyzes the conversion of dethiobiotin (DTB) to biotin by the insertion of a sulfur atom into dethiobiotin via a radical-based mechanism. In Hyphomonas neptunium (strain ATCC 15444), this protein is Biotin synthase.